A 983-amino-acid polypeptide reads, in one-letter code: ABC transporter A family member 2 (983 aa).

A run of 6 helical transmembrane segments spans residues 33 to 53 (FLQL…QAAM), 221 to 241 (IVAL…FGFV), 279 to 299 (ILTA…QFDF), 305 to 325 (FPVV…LAFM), 339 to 359 (VGFF…SGFP), and 416 to 436 (VLTI…WFVL). One can recognise an ABC transporter domain in the interval 518 to 763 (VQIRGLAKTY…FGTGFIANIS (246 aa)). 564-571 (GPNGAGKT) lines the ATP pocket. The disordered stretch occupies residues 963–983 (RSGSTSSRRFSRSGSSRRFSS).

Belongs to the ABC transporter superfamily. ABCA family. CPR flippase (TC 3.A.1.211) subfamily.

The protein resides in the membrane. This is ABC transporter A family member 2 (ABCA2) from Arabidopsis thaliana (Mouse-ear cress).